The following is a 197-amino-acid chain: Protein SYM1 (197 aa).

A run of 4 helical transmembrane segments spans residues 20 to 40 (AIMTGALFGIGDVSAQLLFPT), 55 to 75 (AVIYGSLIFSFIGDKWYKILN), 97 to 117 (VDQLAFAPLGLPFYFTCMSIM), and 137 to 157 (LLTNWAVWPLFQAINFSVVPL).

It belongs to the peroxisomal membrane protein PXMP2/4 family.

It localises to the mitochondrion inner membrane. In terms of biological role, may be involved in cellular response to stress. Required to maintain mitochondrial DNA (mtDNA) integrity and stability. Required for ethanol metabolism and tolerance during heat shock. In Saccharomyces cerevisiae (strain ATCC 204508 / S288c) (Baker's yeast), this protein is Protein SYM1 (SYM1).